The sequence spans 712 residues: Ribosomal RNA large subunit methyltransferase K/L (712 aa).

Residues 46 to 157 (GAYQALLHSR…RENMVVSLDL (112 aa)) form the THUMP domain.

The protein belongs to the methyltransferase superfamily. RlmKL family.

Its subcellular location is the cytoplasm. It catalyses the reaction guanosine(2445) in 23S rRNA + S-adenosyl-L-methionine = N(2)-methylguanosine(2445) in 23S rRNA + S-adenosyl-L-homocysteine + H(+). The catalysed reaction is guanosine(2069) in 23S rRNA + S-adenosyl-L-methionine = N(2)-methylguanosine(2069) in 23S rRNA + S-adenosyl-L-homocysteine + H(+). Specifically methylates the guanine in position 2445 (m2G2445) and the guanine in position 2069 (m7G2069) of 23S rRNA. In Actinobacillus pleuropneumoniae serotype 7 (strain AP76), this protein is Ribosomal RNA large subunit methyltransferase K/L.